The chain runs to 472 residues: Interferon-induced protein with tetratricopeptide repeats 2 (472 aa).

Residue Ser2 is modified to N-acetylserine. 9 TPR repeats span residues 51–89 (ATMC…ADQA), 90–135 (EIRS…RIES), 136–171 (PELD…KPKN), 172–208 (PEFT…NPDN), 247–280 (TDVL…IPNN), 281–335 (AYLH…NLFR), 336–366 (VCSI…KELT), 367–405 (PVAK…NQKS), and 406–448 (REKE…KMQQ). The disordered stretch occupies residues 446 to 472 (MQQADEDSERGLESGSLIPSASSWNGE). Residues 462–472 (LIPSASSWNGE) are compositionally biased toward polar residues.

The protein belongs to the IFIT family. In terms of assembly, domain-swapped homodimer. Component of an interferon-dependent multiprotein complex, at least composed of IFIT1, IFIT2 and IFIT3. Interacts with IFIT1 and IFIT3. Interacts with STING1/MITA and disrupts its interaction with MAVS or TBK1. Interacts with EIF3E and EIF3C.

It localises to the cytoplasm. Its subcellular location is the endoplasmic reticulum. IFN-induced antiviral protein which inhibits expression of viral messenger RNAs lacking 2'-O-methylation of the 5' cap. The ribose 2'-O-methylation would provide a molecular signature to distinguish between self and non-self mRNAs by the host during viral infection. Viruses evolved several ways to evade this restriction system such as encoding their own 2'-O-methylase for their mRNAs or by stealing host cap containing the 2'-O-methylation (cap snatching mechanism). Binds AU-rich viral RNAs, with or without 5' triphosphorylation, RNA-binding is required for antiviral activity. Can promote apoptosis. The sequence is that of Interferon-induced protein with tetratricopeptide repeats 2 (IFIT2) from Homo sapiens (Human).